The sequence spans 314 residues: Ribosomal RNA small subunit methyltransferase H 2 (314 aa).

S-adenosyl-L-methionine-binding positions include 33 to 35 (AGH), D53, Y80, D101, and Q108. A disordered region spans residues 293–314 (KELEENSRSKSAKLRVFEKNDL).

It belongs to the methyltransferase superfamily. RsmH family.

It localises to the cytoplasm. The enzyme catalyses cytidine(1402) in 16S rRNA + S-adenosyl-L-methionine = N(4)-methylcytidine(1402) in 16S rRNA + S-adenosyl-L-homocysteine + H(+). Specifically methylates the N4 position of cytidine in position 1402 (C1402) of 16S rRNA. This is Ribosomal RNA small subunit methyltransferase H 2 from Agathobacter rectalis (strain ATCC 33656 / DSM 3377 / JCM 17463 / KCTC 5835 / VPI 0990) (Eubacterium rectale).